The chain runs to 340 residues: Phenylalanine--tRNA ligase alpha subunit (340 aa).

Glutamate 255 lines the Mg(2+) pocket.

This sequence belongs to the class-II aminoacyl-tRNA synthetase family. Phe-tRNA synthetase alpha subunit type 1 subfamily. In terms of assembly, tetramer of two alpha and two beta subunits. Mg(2+) serves as cofactor.

Its subcellular location is the cytoplasm. It catalyses the reaction tRNA(Phe) + L-phenylalanine + ATP = L-phenylalanyl-tRNA(Phe) + AMP + diphosphate + H(+). The polypeptide is Phenylalanine--tRNA ligase alpha subunit (Exiguobacterium sp. (strain ATCC BAA-1283 / AT1b)).